A 581-amino-acid chain; its full sequence is Bestrophin-1 (581 aa).

Over Met1–Leu31 the chain is Cytoplasmic. Ala10 contributes to the Ca(2+) binding site. Residues Leu32–Arg51 form a helical membrane-spanning segment. At Met52 to Val60 the chain is on the extracellular side. Residues Ile61 to Leu82 traverse the membrane as a helical segment. The Cytoplasmic portion of the chain corresponds to Gly83–Thr237. Residues Gln238–Arg255 traverse the membrane as a helical segment. Over Gln256–Pro274 the chain is Extracellular. A helical transmembrane segment spans residues Leu275–Leu288. At Lys289–Ser581 the chain is on the cytoplasmic side. Ca(2+) is bound by residues Gln293, Asn296, Asp301, and Asp304. Residues Glu416–Ser440 form a disordered region.

Belongs to the anion channel-forming bestrophin (TC 1.A.46) family. Calcium-sensitive chloride channel subfamily. As to quaternary structure, interacts with YWHAG; this interaction promotes the ligand-gated L-glutamate channel activity leading to the positive regulation of NMDA glutamate receptor activity through the L-glutamate secretion. In terms of processing, phosphorylated (in vitro). Dephosphorylated (in vitro) by PP2A.

It is found in the cell membrane. The protein resides in the basolateral cell membrane. It carries out the reaction chloride(in) = chloride(out). The catalysed reaction is hydrogencarbonate(in) = hydrogencarbonate(out). The enzyme catalyses 4-aminobutanoate(in) = 4-aminobutanoate(out). It catalyses the reaction L-glutamate(out) = L-glutamate(in). In terms of biological role, ligand-gated anion channel that allows the movement of anions across cell membranes when activated by calcium (Ca2+). Allows the movement of chloride and hydrogencarbonate. Found in a partially open conformation leading to significantly smaller chloride movement. Upon F2R/PAR-1 activation, the sequestered calcium is released into the cytosol of astrocytes, leading to the (Ca2+)-dependent release of L-glutamate into the synaptic cleft that targets the neuronal postsynaptic GRIN2A/NMDAR receptor resulting in the synaptic plasticity regulation. Upon activation of the norepinephrine-alpha-1 adrenergic receptor signaling pathway, transports as well D-serine than L-glutamate in a (Ca2+)-dependent manner, leading to activation of adjacent NMDAR receptors and therefore regulates the heterosynaptic long-term depression and metaplasticity during initial memory acquisition. Releases the 4-aminobutanoate neurotransmitter in a (Ca2+)-dependent manner, and participates in its tonic release from cerebellar glial cells. This is Bestrophin-1 from Sus scrofa (Pig).